The primary structure comprises 1960 residues: Zinc finger protein 638 (1960 aa).

Residues 1–137 form a disordered region; that stretch reads MSRPRFNPRG…SPKVQSRYTK (137 aa). Residues 19-31 are compositionally biased toward pro residues; sequence APNPPGMRPPGPF. 3 positions are modified to asymmetric dimethylarginine: Arg-47, Arg-49, and Arg-54. The segment covering 60-75 has biased composition (polar residues); it reads SYQNMGPQRMNVQVTQ. Basic and acidic residues predominate over residues 76–89; sequence HRTDPRLTKEKLDF. Over residues 117–137 the composition is skewed to polar residues; that stretch reads KQSSVTQVTEQSPKVQSRYTK. Ser-128 and Ser-288 each carry phosphoserine. Lys-291 participates in a covalent cross-link: Glycyl lysine isopeptide (Lys-Gly) (interchain with G-Cter in SUMO2). Ser-298, Ser-367, Ser-381, and Ser-418 each carry phosphoserine. The disordered stretch occupies residues 352 to 373; the sequence is KSVISSADAHGGPTESKKDYQS. Disordered regions lie at residues 463–673, 749–804, and 827–899; these read NPEI…QSLS, PGKK…STVK, and KASI…KESE. Over residues 468–483 the composition is skewed to basic and acidic residues; it reads PSRRNESNRKENETPR. The segment at 470 to 573 is involved in localization to nuclear speckles; it reads RRNESNRKEN…ERTSRKSVRS (104 aa). Residues 484–556 show a composition bias toward basic residues; the sequence is RRSHSPSPRH…SRNLLRRSPK (73 aa). Position 554 is a phosphoserine (Ser-554). 2 stretches are compositionally biased toward basic and acidic residues: residues 565–583 and 591–602; these read RTSRKSVRSDRKKALEDGG and EVTKQKHTETVD. Phosphoserine occurs at positions 606 and 615. Residues 618 to 628 are compositionally biased toward low complexity; that stretch reads KPSAKSLSSVK. Ser-637 bears the Phosphoserine mark. The RRM 1 domain maps to 676–751; the sequence is SILLVSELPE…KSVKVCVPGK (76 aa). A compositionally biased stretch (basic and acidic residues) spans 755–782; the sequence is QNKEMKKKPSDIKKSSASALKKETDASK. A Glycyl lysine isopeptide (Lys-Gly) (interchain with G-Cter in SUMO2) cross-link involves residue Lys-775. A compositionally biased stretch (low complexity) spans 783-802; sequence TMETVSSSSSAKSGQIKSST. Composition is skewed to basic and acidic residues over residues 838–854, 867–879, and 888–899; these read KSLEAKKSGNIKNKDSN, ASSEDKATGKSAE, and ATEKEPVNKESE. The RRM 2 domain maps to 902–976; the sequence is SVVFISNLPN…NQLSISMAPE (75 aa). Positions 1082–1092 are enriched in basic and acidic residues; it reads SEVQRKNDLEL. Disordered regions lie at residues 1082-1151, 1396-1420, 1442-1462, 1484-1527, and 1550-1583; these read SEVQ…EEPK, TVVSSPKAKSTPSKTESHSTFPKPV, TRSGLAESNSKSKPTQIGVNR, TKQS…KSKE, and PSQAKQNPLKGKRKEALKISPSPELNLKKKKGKT. At Ser-1099 the chain carries Phosphoserine. A compositionally biased stretch (basic and acidic residues) spans 1140 to 1151; it reads VHQEELGKEEPK. Residues 1399–1409 show a composition bias toward low complexity; sequence SSPKAKSTPSK. Ser-1400 carries the phosphoserine modification. Polar residues predominate over residues 1442–1459; the sequence is TRSGLAESNSKSKPTQIG. 2 stretches are compositionally biased toward basic and acidic residues: residues 1484 to 1503 and 1518 to 1527; these read TKQSQETETKPPIMKRDDSN and TTDRSSKSKE. Phosphoserine is present on residues Ser-1635 and Ser-1661. 2 disordered regions span residues 1763–1898 and 1930–1960; these read EVGD…SDVP and KSTRHKQNTEKFMAKQRKEKEQNETEERSSR. Positions 1772–1790 are enriched in basic and acidic residues; the sequence is NDSKVELARGKIEHHTDKK. Lys-1804 participates in a covalent cross-link: Glycyl lysine isopeptide (Lys-Gly) (interchain with G-Cter in SUMO2). Residues 1806–1818 are compositionally biased toward polar residues; sequence DSFSQVGPGSETV. Residues 1819–1831 are compositionally biased toward basic and acidic residues; sequence TQKDLKTMPERHL. The residue at position 1864 (Ser-1864) is a Phosphoserine. A compositionally biased stretch (basic and acidic residues) spans 1870–1885; that stretch reads AELKDSEPDEKRRKTQ. The Matrin-type zinc-finger motif lies at 1876–1906; it reads EPDEKRRKTQDSSVGKSMTSDVPGDLDFLVP. Residues 1886–1895 are compositionally biased toward polar residues; the sequence is DSSVGKSMTS. The span at 1936-1960 shows a compositional bias: basic and acidic residues; sequence QNTEKFMAKQRKEKEQNETEERSSR.

Interacts with FHL2. Interacts with CEBPA, CEBPD and CEBPG. Interacts with MPHOSPH8 and TASOR components of the HUSH complex; leading to recruitment of the HUSH complex. Interacts with SETDB1. Interacts with HDAC1. Interacts with HDAC4.

Its subcellular location is the nucleus speckle. Functionally, transcription factor that binds to cytidine clusters in double-stranded DNA. Plays a key role in the silencing of unintegrated retroviral DNA: some part of the retroviral DNA formed immediately after infection remains unintegrated in the host genome and is transcriptionally repressed. Mediates transcriptional repression of unintegrated viral DNA by specifically binding to the cytidine clusters of retroviral DNA and mediating the recruitment of chromatin silencers, such as the HUSH complex, SETDB1 and the histone deacetylases HDAC1 and HDAC4. Acts as an early regulator of adipogenesis by acting as a transcription cofactor of CEBPs (CEBPA, CEBPD and/or CEBPG), controlling the expression of PPARG and probably of other proadipogenic genes, such as SREBF1. May also regulate alternative splicing of target genes during adipogenesis. In Mus musculus (Mouse), this protein is Zinc finger protein 638.